A 379-amino-acid polypeptide reads, in one-letter code: Lipid-A-disaccharide synthase (379 aa).

Belongs to the LpxB family.

It catalyses the reaction a lipid X + a UDP-2-N,3-O-bis[(3R)-3-hydroxyacyl]-alpha-D-glucosamine = a lipid A disaccharide + UDP + H(+). It participates in bacterial outer membrane biogenesis; LPS lipid A biosynthesis. Functionally, condensation of UDP-2,3-diacylglucosamine and 2,3-diacylglucosamine-1-phosphate to form lipid A disaccharide, a precursor of lipid A, a phosphorylated glycolipid that anchors the lipopolysaccharide to the outer membrane of the cell. This Pseudomonas fluorescens (strain SBW25) protein is Lipid-A-disaccharide synthase.